The chain runs to 1306 residues: DNA-directed RNA polymerase subunit beta' (1306 aa).

4 residues coordinate Zn(2+): Cys214, Cys285, Cys292, and Cys295. 2 disordered regions span residues 1234–1263 (LDNGEDSLNNRYGQGERDNNNSDKKPPNRL) and 1281–1306 (IARAYTEADPPWSVESKQEKDDDDDK). The span at 1247–1259 (QGERDNNNSDKKP) shows a compositional bias: basic and acidic residues.

It belongs to the RNA polymerase beta' chain family. RpoC2 subfamily. In terms of assembly, in cyanobacteria the RNAP catalytic core is composed of 2 alpha, 1 beta, 1 beta', 1 gamma and 1 omega subunit. When a sigma factor is associated with the core the holoenzyme is formed, which can initiate transcription. It depends on Zn(2+) as a cofactor.

It carries out the reaction RNA(n) + a ribonucleoside 5'-triphosphate = RNA(n+1) + diphosphate. DNA-dependent RNA polymerase catalyzes the transcription of DNA into RNA using the four ribonucleoside triphosphates as substrates. In Crocosphaera subtropica (strain ATCC 51142 / BH68) (Cyanothece sp. (strain ATCC 51142)), this protein is DNA-directed RNA polymerase subunit beta'.